The following is a 309-amino-acid chain: MATATVPFFDSNDRLFDQGKAFWNNYLKGRPSAPDAFFQRLFNYHQSHGGQFGTVHDVGAGNGPYAHILRSKFQHVIISDIAKENVVLAEDRLGVDGFSYRAARVEEGDDIAPGSVDMVFATNVLHFCDQPLAMSEIARQLRPGGTFACAAFGAAQFEDPRIQDVYTRINHSGGRALLAKADDPEKLVAVMARTQGKYNVAPLDEGLFRPRAQRIHLNMENGGITAPLPPEVQVHEPVYTGVDDVETFVQEDGWSFVTGLEGVKEHVLSFPFARDDPNFGELWQEMEEIIGDDEVKGTWPAKIILATRR.

The interval 57–149 (DVGAGNGPYA…QLRPGGTFAC (93 aa)) is methyltransferase domain.

The protein belongs to the methyltransferase superfamily.

Its pathway is secondary metabolite biosynthesis. Its function is as follows. Methyltransferase; part of the gene cluster that mediates the biosynthesis of the tetrahydroxanthone dimer secalonic acid D. The pathway begins with the synthesis of atrochrysone thioester by the polyketide synthase AacuL. The atrochrysone carboxyl ACP thioesterase AacuM then breaks the thioester bond and releases the atrochrysone carboxylic acid from AacuL. Atrochrysone carboxylic acid is decarboxylated by the decarboxylase AacuI, and oxidized by the anthrone oxygenase AacuG to yield emodin. Emodin is then reduced to emodin hydroquinone by a yet unidentified oxidoreductase. A-ring reduction by the short chain dehydrogenase AacuN, dehydration by the scytalone dehydratase-like protein AacuK and probable spontaneous re-oxidation, results in overall deoxygenation to chrysophanol. Baeyer-Villiger oxidation by the Baeyer-Villiger monooxygenase (BVMO) AacuH then yields monodictyphenone. Monodictyphenone is transformed into compounds with the tetrahydroxanthone skeleton via methylesterification by the methyltransferase AacuQ, followed by the action of the flavin-dependent monooxygenase AacuC, the isomerase AacuP, and the short chain dehydrogenase/reductase AacuF or AacuD. AacuF and AacuD should accept the same compound as a substrate but perform the ketoreduction with a different stereoselectivity, thus yielding blennolides B and A, respectively. In the final step of the biosynthesis, the cytochrome P450 monooxygenase AacuE accepts blennolide B and/or blennolide A to conduct the dimerization reaction to furnish the tetrahydroxanthone dimers, secalonic acids D, B, and F. The polypeptide is Methyltransferase AacuQ (Aspergillus aculeatus (strain ATCC 16872 / CBS 172.66 / WB 5094)).